Here is a 108-residue protein sequence, read N- to C-terminus: Inner membrane protein H108R (108 aa).

A helical membrane pass occupies residues 10-32 (LIVIITILITTRELSTTMLIVSL). The segment covering 49-64 (ENNTFSMPQKNSFSES) has biased composition (polar residues). The tract at residues 49–69 (ENNTFSMPQKNSFSESYNKDK) is disordered. Asn50 carries N-linked (GlcNAc...) asparagine; by host glycosylation.

The protein belongs to the asfivirus H108R family.

The protein localises to the virion membrane. The sequence is that of Inner membrane protein H108R from Ornithodoros (relapsing fever ticks).